An 815-amino-acid chain; its full sequence is G-type lectin S-receptor-like serine/threonine-protein kinase SD1-1 (815 aa).

The first 22 residues, 1–22, serve as a signal peptide directing secretion; the sequence is MREIHSLFSLSLFLISSSLSVA. The Extracellular segment spans residues 23–438; the sequence is LDYNVITPKE…FAKIEFKGRE (416 aa). The region spanning 25–152 is the Bulb-type lectin domain; that stretch reads YNVITPKEFL…EEAVLWQSFD (128 aa). N-linked (GlcNAc...) asparagine glycosylation is found at N93, N249, and N265. The EGF-like domain occupies 288–326; sequence PEDECDYYSICGAYAVCGINSKNTPSCSCLQGFKPKSGR. 2 cysteine pairs are disulfide-bonded: C292/C304 and C298/C314. Residues N329 and N385 are each glycosylated (N-linked (GlcNAc...) asparagine). In terms of domain architecture, PAN spans 345–428; it reads CEKKDAFVKF…FGQDVYIRMG (84 aa). 2 disulfide bridges follow: C378-C403 and C382-C388. Residues 439–459 form a helical membrane-spanning segment; that stretch reads VVGMVVGSVVAIAVVLVVVFA. Residues 460–815 lie on the Cytoplasmic side of the membrane; that stretch reads CFRKKIMKRY…EVSITMLQGR (356 aa). The 284-residue stretch at 500-783 folds into the Protein kinase domain; sequence FSYVNFLGRG…SDSSLPHPTQ (284 aa). Residues 506 to 514 and K528 each bind ATP; that span reads LGRGGFGPV. S534 carries the post-translational modification Phosphoserine. The tract at residues 589–606 is caM-binding; that stretch reads RRSTELDWKKRMNIINGV. The Proton acceptor role is filled by D625. S642 carries the phosphoserine modification. T659 bears the Phosphothreonine mark. Phosphoserine is present on residues S797 and S803. T810 carries the phosphothreonine modification.

Belongs to the protein kinase superfamily. Ser/Thr protein kinase family. As to quaternary structure, interacts with PUB9, PUB13 and PUB14.

The protein localises to the cell membrane. The enzyme catalyses L-seryl-[protein] + ATP = O-phospho-L-seryl-[protein] + ADP + H(+). It catalyses the reaction L-threonyl-[protein] + ATP = O-phospho-L-threonyl-[protein] + ADP + H(+). In Arabidopsis thaliana (Mouse-ear cress), this protein is G-type lectin S-receptor-like serine/threonine-protein kinase SD1-1 (SD11).